Consider the following 86-residue polypeptide: MKEGIHPKNYRPVVFQDLSNGDKFIVRSCIVTSETIKMEDGHEYPLSKVEITNASHPFFTGQQMLLDTAGRVERFNKRFGKMGKKS.

This sequence belongs to the bacterial ribosomal protein bL31 family. Type B subfamily. In terms of assembly, part of the 50S ribosomal subunit.

In Chloroherpeton thalassium (strain ATCC 35110 / GB-78), this protein is Large ribosomal subunit protein bL31B.